We begin with the raw amino-acid sequence, 602 residues long: RecBCD enzyme subunit RecD (602 aa).

Residue 171–178 (GGPGTGKT) participates in ATP binding.

The protein belongs to the RecD family. As to quaternary structure, heterotrimer of RecB, RecC and RecD. All subunits contribute to DNA-binding.

The catalysed reaction is Couples ATP hydrolysis with the unwinding of duplex DNA at the replication fork by translocating in the 5'-3' direction. This creates two antiparallel DNA single strands (ssDNA). The leading ssDNA polymer is the template for DNA polymerase III holoenzyme which synthesizes a continuous strand.. The enzyme catalyses ATP + H2O = ADP + phosphate + H(+). In terms of biological role, a helicase/nuclease that prepares dsDNA breaks (DSB) for recombinational DNA repair. Binds to DSBs and unwinds DNA via a highly rapid and processive ATP-dependent bidirectional helicase activity. Unwinds dsDNA until it encounters a Chi (crossover hotspot instigator) sequence from the 3' direction. Cuts ssDNA a few nucleotides 3' to the Chi site. The properties and activities of the enzyme are changed at Chi. The Chi-altered holoenzyme produces a long 3'-ssDNA overhang and facilitates RecA-binding to the ssDNA for homologous DNA recombination and repair. Holoenzyme degrades any linearized DNA that is unable to undergo homologous recombination. In the holoenzyme this subunit has ssDNA-dependent ATPase and 5'-3' helicase activity. When added to pre-assembled RecBC greatly stimulates nuclease activity and augments holoenzyme processivity. Negatively regulates the RecA-loading ability of RecBCD. In Buchnera aphidicola subsp. Acyrthosiphon pisum (strain APS) (Acyrthosiphon pisum symbiotic bacterium), this protein is RecBCD enzyme subunit RecD.